The following is a 66-amino-acid chain: Large ribosomal subunit protein bL35 (66 aa).

Belongs to the bacterial ribosomal protein bL35 family.

In Moorella thermoacetica (strain ATCC 39073 / JCM 9320), this protein is Large ribosomal subunit protein bL35.